Consider the following 466-residue polypeptide: MVMEKPSPLLVGREFVRQYYTLLNQAPDMLHRFYGKNSSYVHGGLDSNGKPADAVYGQKEIHRKVMSQNFTNCHTKIRHVDAHATLNDGVVVQVMGLLSNNNQALRRFMQTFVLAPEGSVANKFYVHNDIFRYQDEVFGGFVTEPQEESEEEVEEPEERQQTPEVVPDDSGTFYDQAVVSNDMEEHLEEPVAEPEPDPEPEPEQEPVSEIQEEKPEPVLEETVPEDAQKSSSPAPADIAQTVQEDLRTFSWASVTSKNLPPSGAVPVTGIPPHVVKVPASQPRPESKPESQIPPQRPQRDQRVREQRINIPPQRGPRPIREAGEQGDIEPRRMVRHPDSHQLFIGNLPHEVDKSELKDFFQSYGNVVELRINSGGKLPNFGFVVFDDSEPVQKVLSNRPIMFRGEVRLNVEEKKTRAAREGDRRDNRLRGPGGPRGGLGGGMRGPPRGGMVQKPGFGVGRGLAPRQ.

In terms of domain architecture, NTF2 spans 11–133; the sequence is VGREFVRQYY…FYVHNDIFRY (123 aa). Glycyl lysine isopeptide (Lys-Gly) (interchain with G-Cter in ubiquitin) cross-links involve residues K36, K50, K59, K64, K76, and K123. The acidic disordered region stretch occupies residues 142-225; sequence VTEPQEESEE…EPVLEETVPE (84 aa). A Phosphothreonine modification is found at T143. 2 disordered regions span residues 144 to 172 and 184 to 243; these read EPQEESEEEVEEPEERQQTPEVVPDDSGT and EEHL…QTVQ. 2 stretches are compositionally biased toward acidic residues: residues 145 to 157 and 185 to 206; these read PQEESEEEVEEPE and EHLEEPVAEPEPDPEPEPEQEP. S149 is subject to Phosphoserine. Phosphoserine is present on residues S231, S232, S250, and S253. The tract at residues 255–329 is disordered; that stretch reads TSKNLPPSGA…REAGEQGDIE (75 aa). Composition is skewed to basic and acidic residues over residues 297 to 307 and 318 to 329; these read PQRDQRVREQR and PIREAGEQGDIE. Residues 340–415 enclose the RRM domain; the sequence is HQLFIGNLPH…VRLNVEEKKT (76 aa). Glycyl lysine isopeptide (Lys-Gly) (interchain with G-Cter in ubiquitin) cross-links involve residues K353 and K357. A Phosphoserine modification is found at S373. K376 is covalently cross-linked (Glycyl lysine isopeptide (Lys-Gly) (interchain with G-Cter in ubiquitin)). K376 bears the N6-acetyllysine; alternate mark. K376 participates in a covalent cross-link: Glycyl lysine isopeptide (Lys-Gly) (interchain with G-Cter in SUMO2); alternate. Residue K393 forms a Glycyl lysine isopeptide (Lys-Gly) (interchain with G-Cter in ubiquitin); alternate linkage. An RG-rich region region spans residues 410 to 466; the sequence is VEEKKTRAAREGDRRDNRLRGPGGPRGGLGGGMRGPPRGGMVQKPGFGVGRGLAPRQ. Residues 413-428 show a composition bias toward basic and acidic residues; sequence KKTRAAREGDRRDNRL. The tract at residues 413–466 is disordered; sequence KKTRAAREGDRRDNRLRGPGGPRGGLGGGMRGPPRGGMVQKPGFGVGRGLAPRQ. The residue at position 429 (R429) is an Asymmetric dimethylarginine. The segment covering 430–447 has biased composition (gly residues); sequence GPGGPRGGLGGGMRGPPR. R435 is subject to Asymmetric dimethylarginine; alternate. R435, R447, R460, and R465 each carry omega-N-methylarginine; alternate. R460 carries the dimethylated arginine; alternate modification.

As to quaternary structure, homodimer and oligomer. Component of a TAU mRNP complex, at least composed of IGF2BP1, ELAVL4 and G3BP1. Binds to the SH3 domain of Ras GTPase-activating protein (RASA1) in proliferating cells. No interaction in quiescent cells. Interacts (via NTF2 domain) with USP10; inhibiting stress granule formation by lowering G3BP1 valence. Interacts (via NTF2 domain) with CAPRIN1; promoting stress granule formation by lowering the saturation-concentration of G3BP1. Interacts (via NTF2 domain) with UBAP2L; promoting stress granule formation. Associates (via RG-rich region) with 40S ribosome subunits. Interacts with RPTOR and SPAG5; this complex is increased by oxidative stress. Interacts with ATXN2L. Interacts with STYXL1. Interacts with CGAS (via N-terminus); this interaction promotes the DNA-binding and activation of CGAS. Interacts (via C-terminus) with RIGI. Interacts with PABPC1. Interacts with QKI (isoforms QKI6 and QKI7); directing N(7)-methylguanine-containing mRNAs to stress granules. It depends on Mg(2+) as a cofactor. Phosphorylation of the acidic disordered region regulates stress granule assembly. RASA1-dependent phosphorylation of Ser-149 induces a conformational change that prevents self-association. Dephosphorylation after HRAS activation is required for stress granule assembly. Ser-149 phosphorylation induces partial nuclear localization. Post-translationally, arg-435 is dimethylated, probably to asymmetric dimethylarginine. In terms of processing, ubiquitinated by TRIM21 via 'Lys-63'-linked polyubiquitination in the NTF2 domain in response to heat shock, leading to stress granule disassembly: ubiquitination promotes interaction with the FAF2 adapter, followed by interaction with VCP, which extracts G3BP1 from stress granules, leading to stress granule disassembly. In case of prolonged stress, ubiquitination by TRIM21 leads to autophagy-dependent degradation of G3BP1 via recruitment of ubiquitinated G3BP1 by SQSTM1 and/or CALCOCO2 to autophagosomes.

It is found in the cytoplasm. It localises to the cytosol. The protein resides in the perikaryon. The protein localises to the stress granule. Its subcellular location is the nucleus. It catalyses the reaction ATP + H2O = ADP + phosphate + H(+). Its activity is regulated as follows. Under physiological conditions, G3BP1 adopts a compact state that is stabilized by intramolecular interactions between the RG-rich and the acidic regions that inhibit phase separation. Upon stress, polysomes disassemble and mRNAs are released in an unfolded protein-free state. Binding of unfolded mRNA to G3BP1 outcompetes the intramolecular interactions and RNA-bound G3BP1 adopts an expanded conformation in which the RG-rich region becomes exposed to engage in protein-protein and protein-RNA interactions, allowing physical cross-linking of RNA molecules to form protein-RNA condensates, leading to liquid-liquid phase separation (LLPS). Its function is as follows. Protein involved in various processes, such as stress granule formation and innate immunity. Plays an essential role in stress granule formation. Stress granules are membraneless compartments that store mRNAs and proteins, such as stalled translation pre-initiation complexes, in response to stress. Promotes formation of stress granules phase-separated membraneless compartment by undergoing liquid-liquid phase separation (LLPS) upon unfolded RNA-binding: functions as a molecular switch that triggers RNA-dependent LLPS in response to a rise in intracellular free RNA concentrations. Also acts as an ATP- and magnesium-dependent helicase: unwinds DNA/DNA, RNA/DNA, and RNA/RNA substrates with comparable efficiency. Acts unidirectionally by moving in the 5' to 3' direction along the bound single-stranded DNA. Unwinds preferentially partial DNA and RNA duplexes having a 17 bp annealed portion and either a hanging 3' tail or hanging tails at both 5'- and 3'-ends. Plays an essential role in innate immunity by promoting CGAS and RIGI activity. Participates in the DNA-triggered cGAS/STING pathway by promoting the DNA binding and activation of CGAS. Triggers the condensation of cGAS, a process probably linked to the formation of membrane-less organelles. Also enhances RIGI-induced type I interferon production probably by helping RIGI at sensing pathogenic RNA. May also act as a phosphorylation-dependent sequence-specific endoribonuclease in vitro: Cleaves exclusively between cytosine and adenine and cleaves MYC mRNA preferentially at the 3'-UTR. The protein is Ras GTPase-activating protein-binding protein 1 (G3BP1) of Pongo abelii (Sumatran orangutan).